The sequence spans 173 residues: Alpha-crystallin A chain (173 aa).

Met-1 carries the N-acetylmethionine modification. Positions 1–63 (MDIAIQHPWF…RTVLDSGISE (63 aa)) are required for complex formation with BFSP1 and BFSP2. Residue Gln-6 is modified to Deamidated glutamine; partial. Phosphoserine is present on Ser-45. Gln-50 is subject to Deamidated glutamine; partial. Positions 52–162 (LFRTVLDSGI…GHSERAIPVS (111 aa)) constitute a sHSP domain. The residue at position 70 (Lys-70) is an N6-acetyllysine. Gln-90 is modified (deamidated glutamine; partial). N6-acetyllysine is present on Lys-99. Residue His-100 participates in Zn(2+) binding. A Deamidated asparagine; partial modification is found at Asn-101. Zn(2+) contacts are provided by Glu-102 and His-107. A Phosphoserine modification is found at Ser-122. At Asn-123 the chain carries Deamidated asparagine; partial. Residues 144-173 (PKIPSGMDAGHSERAIPVSREEKPGSAPSS) are disordered. Positions 153-167 (GHSERAIPVSREEKP) are enriched in basic and acidic residues. Position 154 (His-154) interacts with Zn(2+). Residue Ser-162 is glycosylated (O-linked (GlcNAc) serine).

This sequence belongs to the small heat shock protein (HSP20) family. In terms of assembly, heteromer composed of three CRYAA and one CRYAB subunits. Inter-subunit bridging via zinc ions enhances stability, which is crucial as there is no protein turn over in the lens. Can also form homodimers and homotetramers (dimers of dimers) which serve as the building blocks of homooligomers. Within homooligomers, the zinc-binding motif is created from residues of 3 different molecules. His-100 and Glu-102 from one molecule are ligands of the zinc ion, and His-107 and His-154 residues from additional molecules complete the site with tetrahedral coordination geometry. Part of a complex required for lens intermediate filament formation composed of BFSP1, BFSP2 and CRYAA. In terms of processing, acetylation at Lys-70 may increase chaperone activity. Undergoes age-dependent proteolytical cleavage at the C-terminus.

Its subcellular location is the cytoplasm. It is found in the nucleus. Functionally, contributes to the transparency and refractive index of the lens. Acts as a chaperone, preventing aggregation of various proteins under a wide range of stress conditions. Required for the correct formation of lens intermediate filaments as part of a complex composed of BFSP1, BFSP2 and CRYAA. This chain is Alpha-crystallin A chain (CRYAA), found in Equus caballus (Horse).